Reading from the N-terminus, the 303-residue chain is Ubiquinone biosynthesis protein COQ4, mitochondrial (303 aa).

Positions 191, 192, 195, and 207 each coordinate Zn(2+).

Belongs to the COQ4 family. As to quaternary structure, component of a multi-subunit COQ enzyme complex, composed of at least COQ3, COQ4, COQ5, COQ6, COQ7 and COQ9. Zn(2+) serves as cofactor.

The protein resides in the mitochondrion inner membrane. It carries out the reaction a 4-hydroxy-3-methoxy-5-(all-trans-polyprenyl)benzoate + H(+) = a 2-methoxy-6-(all-trans-polyprenyl)phenol + CO2. It functions in the pathway cofactor biosynthesis; ubiquinone biosynthesis. Functionally, lyase that catalyzes the C1-decarboxylation of 4-hydroxy-3-methoxy-5-(all-trans-polyprenyl)benzoic acid into 2-methoxy-6-(all-trans-polyprenyl)phenol during ubiquinone biosynthesis. This chain is Ubiquinone biosynthesis protein COQ4, mitochondrial, found in Komagataella phaffii (strain GS115 / ATCC 20864) (Yeast).